The primary structure comprises 338 residues: O-methyltransferase 4 (338 aa).

S-adenosyl-L-methionine is bound by residues glycine 184, aspartate 207, asparagine 230, phenylalanine 231, lysine 244, and arginine 245. Catalysis depends on histidine 248, which acts as the Proton acceptor.

The protein belongs to the class I-like SAM-binding methyltransferase superfamily. Cation-independent O-methyltransferase family. COMT subfamily.

The catalysed reaction is (3,5-dichloro-2,4,6-trihydroxyphenyl)hexan-1-one + S-adenosyl-L-methionine = 1-(3,5-dichloro-2,6-dihydroxy-4-methoxyphenyl)hexan-1-one + S-adenosyl-L-homocysteine + H(+). The protein is O-methyltransferase 4 (omt4) of Dictyostelium discoideum (Social amoeba).